A 182-amino-acid polypeptide reads, in one-letter code: Large ribosomal subunit protein bL25 (182 aa).

It belongs to the bacterial ribosomal protein bL25 family. CTC subfamily. As to quaternary structure, part of the 50S ribosomal subunit; part of the 5S rRNA/L5/L18/L25 subcomplex. Contacts the 5S rRNA. Binds to the 5S rRNA independently of L5 and L18.

In terms of biological role, this is one of the proteins that binds to the 5S RNA in the ribosome where it forms part of the central protuberance. This Borrelia hermsii (strain HS1 / DAH) protein is Large ribosomal subunit protein bL25.